Here is a 1038-residue protein sequence, read N- to C-terminus: Activated CDC42 kinase 1 (1038 aa).

An SAM-like domain region spans residues 1-110; that stretch reads MQPEEGTGWL…TSPAPGGPAG (110 aa). Residues 90–114 form a disordered region; the sequence is PPHHSQSTFRKTSPAPGGPAGEGPL. In terms of domain architecture, Protein kinase spans 126–385; it reads LRLLEKLGDG…PTFVALRDFL (260 aa). ATP is bound by residues 132–140 and Lys158; that span reads LGDGSFGVV. Asp252 acts as the Proton acceptor in catalysis. The residue at position 284 (Tyr284) is a Phosphotyrosine; by SRC and autocatalysis. The 61-residue stretch at 388–448 folds into the SH3 domain; the sequence is AQPTDMRALQ…PRNVVTSVAG (61 aa). Residues 454–466 form the CRIB domain; that stretch reads ISQPLQNSFIHTG. The tract at residues 497 to 535 is disordered; that stretch reads LSVELSTSRPPQHLGGVKKPTYDPVSEDQDPLSSDFKRL. A Phosphotyrosine modification is found at Tyr518. The required for interaction with SRC stretch occupies residues 623-652; it reads DWDARPLPPPPAYDDVAQDEDDFEICSINS. The interval 632–635 is required for interaction with NEDD4; the sequence is PPAY. Disordered stretches follow at residues 659 to 702 and 718 to 840; these read VPAG…SSAQ and LQAP…GPRA. Ser724 is modified (phosphoserine). Positions 733–876 are EBD domain; the sequence is GDDKPQVPPR…SYLERYQRFL (144 aa). Composition is skewed to pro residues over residues 738 to 749, 772 to 783, and 794 to 805; these read QVPPRVPIPPRP, PASPPRVPPREP, and PLVPPGSSPLPP. Tyr827 carries the post-translational modification Phosphotyrosine. Arg839 bears the Omega-N-methylarginine mark. Residues Tyr859 and Tyr872 each carry the phosphotyrosine modification. At Ser881 the chain carries Phosphoserine. Residues 917-957 are disordered; sequence LDPKANFSTNNSNPGARPPPPRATARLPQRGCPGDGPEAGR. Residues 958–996 enclose the UBA domain; that stretch reads PADKIQMAMVHGVTTEECQAALQCHGWSVQRAAQYLKVE.

Belongs to the protein kinase superfamily. Tyr protein kinase family. As to quaternary structure, interacts with NEDD4 (via WW3 domain). NEDD4L and EGF promote association with NEDD4. Homodimer. Interacts with AR, CDC42, WWASL and WWOX. Interacts with CSPG4 (activated). Interacts with MERTK (activated); stimulates autophosphorylation. May interact (phosphorylated) with HSP90AB1; maintains kinase activity. Interacts with NPHP1. Interacts with SNX9 (via SH3 domain). Interacts with SRC (via SH2 and SH3 domain). Interacts with EGFR, and this interaction is dependent on EGF stimulation and kinase activity of EGFR. Interacts (via kinase domain) with AKT1. Part of a collagen stimulated complex involved in cell migration composed of CDC42, CRK, TNK2 and BCAR1/p130cas. Interacts with BCAR1/p130cas via SH3 domains. Forms complexes with GRB2 and numerous receptor tyrosine kinases (RTK) including LTK, AXL or PDGFRL, in which GRB2 promotes RTK recruitment by TNK2. Mg(2+) is required as a cofactor. Post-translationally, autophosphorylation regulates kinase activity. Phosphorylation on Tyr-518 is required for interaction with SRC and is observed during association with clathrin-coated pits. In terms of processing, polyubiquitinated by NEDD4 and NEDD4L. Degradation can be induced by EGF and is lysosome-dependent. As to expression, the Tyr-284 phosphorylated form shows a significant increase in expression in breast cancers during the progressive stages i.e. normal to hyperplasia (ADH), ductal carcinoma in situ (DCIS), invasive ductal carcinoma (IDC) and lymph node metastatic (LNMM) stages. It also shows a significant increase in expression in prostate cancers during the progressive stages.

The protein localises to the cell membrane. Its subcellular location is the nucleus. It localises to the endosome. The protein resides in the cell junction. It is found in the adherens junction. The protein localises to the cytoplasmic vesicle membrane. Its subcellular location is the cytoplasmic vesicle. It localises to the clathrin-coated vesicle. The protein resides in the membrane. It is found in the clathrin-coated pit. The protein localises to the cytoplasm. Its subcellular location is the perinuclear region. It localises to the cytosol. It carries out the reaction L-tyrosyl-[protein] + ATP = O-phospho-L-tyrosyl-[protein] + ADP + H(+). It catalyses the reaction L-seryl-[protein] + ATP = O-phospho-L-seryl-[protein] + ADP + H(+). The catalysed reaction is L-threonyl-[protein] + ATP = O-phospho-L-threonyl-[protein] + ADP + H(+). With respect to regulation, inhibited by AIM-100 (4-amino-5,6-biaryl-furo[2,3-d]pyrimidine), which suppresses activating phosphorylation at Tyr-284. Repressed by dasatinib. In terms of biological role, non-receptor tyrosine-protein and serine/threonine-protein kinase that is implicated in cell spreading and migration, cell survival, cell growth and proliferation. Transduces extracellular signals to cytosolic and nuclear effectors. Phosphorylates AKT1, AR, MCF2, WASL and WWOX. Implicated in trafficking and clathrin-mediated endocytosis through binding to epidermal growth factor receptor (EGFR) and clathrin. Binds to both poly- and mono-ubiquitin and regulates ligand-induced degradation of EGFR, thereby contributing to the accumulation of EGFR at the limiting membrane of early endosomes. Downstream effector of CDC42 which mediates CDC42-dependent cell migration via phosphorylation of BCAR1. May be involved both in adult synaptic function and plasticity and in brain development. Activates AKT1 by phosphorylating it on 'Tyr-176'. Phosphorylates AR on 'Tyr-267' and 'Tyr-363' thereby promoting its recruitment to androgen-responsive enhancers (AREs). Phosphorylates WWOX on 'Tyr-287'. Phosphorylates MCF2, thereby enhancing its activity as a guanine nucleotide exchange factor (GEF) toward Rho family proteins. Contributes to the control of AXL receptor levels. Confers metastatic properties on cancer cells and promotes tumor growth by negatively regulating tumor suppressor such as WWOX and positively regulating pro-survival factors such as AKT1 and AR. Phosphorylates WASP. The protein is Activated CDC42 kinase 1 (TNK2) of Homo sapiens (Human).